Reading from the N-terminus, the 217-residue chain is Uracil-DNA glycosylase (217 aa).

Asp-62 serves as the catalytic Proton acceptor.

Belongs to the uracil-DNA glycosylase (UDG) superfamily. UNG family.

It localises to the cytoplasm. It catalyses the reaction Hydrolyzes single-stranded DNA or mismatched double-stranded DNA and polynucleotides, releasing free uracil.. In terms of biological role, excises uracil residues from the DNA which can arise as a result of misincorporation of dUMP residues by DNA polymerase or due to deamination of cytosine. This Streptococcus equi subsp. zooepidemicus (strain H70) protein is Uracil-DNA glycosylase.